A 365-amino-acid chain; its full sequence is Phospho-N-acetylmuramoyl-pentapeptide-transferase (365 aa).

The next 9 helical transmembrane spans lie at 19 to 39 (LLILLTVVLFLLMTLFQWLLT), 47 to 67 (AVILPVSVSAIACGLLGFGVI), 91 to 111 (AGTPTMGGIFFIPVAVGVALI), 115 to 135 (FDPQVVAVGIVTLAYMMIGWV), 155 to 175 (LLLQIAVAVLFCLWMLWTGSP), 184 to 204 (GNLIIPLGWLFWILAIFVLVA), 224 to 244 (AIAFLGLAAIVAPTSVGLMIF), 281 to 301 (AVGLLSGNLWGLFIISGIFFV), and 344 to 364 (TQIVGVFYLINAGLAILGFIS).

Belongs to the glycosyltransferase 4 family. MraY subfamily. It depends on Mg(2+) as a cofactor.

It localises to the cell inner membrane. It catalyses the reaction UDP-N-acetyl-alpha-D-muramoyl-L-alanyl-gamma-D-glutamyl-meso-2,6-diaminopimeloyl-D-alanyl-D-alanine + di-trans,octa-cis-undecaprenyl phosphate = di-trans,octa-cis-undecaprenyl diphospho-N-acetyl-alpha-D-muramoyl-L-alanyl-D-glutamyl-meso-2,6-diaminopimeloyl-D-alanyl-D-alanine + UMP. It participates in cell wall biogenesis; peptidoglycan biosynthesis. In terms of biological role, catalyzes the initial step of the lipid cycle reactions in the biosynthesis of the cell wall peptidoglycan: transfers peptidoglycan precursor phospho-MurNAc-pentapeptide from UDP-MurNAc-pentapeptide onto the lipid carrier undecaprenyl phosphate, yielding undecaprenyl-pyrophosphoryl-MurNAc-pentapeptide, known as lipid I. This chain is Phospho-N-acetylmuramoyl-pentapeptide-transferase, found in Gloeothece citriformis (strain PCC 7424) (Cyanothece sp. (strain PCC 7424)).